We begin with the raw amino-acid sequence, 242 residues long: Methylthioribulose-1-phosphate dehydratase (242 aa).

Basic and acidic residues predominate over residues 1 to 11 (MAQEIQKENND). The disordered stretch occupies residues 1-20 (MAQEIQKENNDHLVQSSDPE). Cysteine 100 is a binding site for substrate. Zn(2+) is bound by residues histidine 117 and histidine 119. Glutamate 146 acts as the Proton donor/acceptor in catalysis. Position 202 (histidine 202) interacts with Zn(2+).

This sequence belongs to the aldolase class II family. MtnB subfamily. Requires Zn(2+) as cofactor.

Its subcellular location is the cytoplasm. It catalyses the reaction 5-(methylsulfanyl)-D-ribulose 1-phosphate = 5-methylsulfanyl-2,3-dioxopentyl phosphate + H2O. It participates in amino-acid biosynthesis; L-methionine biosynthesis via salvage pathway; L-methionine from S-methyl-5-thio-alpha-D-ribose 1-phosphate: step 2/6. Its function is as follows. Catalyzes the dehydration of methylthioribulose-1-phosphate (MTRu-1-P) into 2,3-diketo-5-methylthiopentyl-1-phosphate (DK-MTP-1-P). This is Methylthioribulose-1-phosphate dehydratase from Aspergillus niger (strain ATCC MYA-4892 / CBS 513.88 / FGSC A1513).